The following is a 194-amino-acid chain: NADH-quinone oxidoreductase subunit B (194 aa).

[4Fe-4S] cluster contacts are provided by Cys72, Cys73, Cys137, and Cys167.

Belongs to the complex I 20 kDa subunit family. NDH-1 is composed of 14 different subunits. Subunits NuoB, C, D, E, F, and G constitute the peripheral sector of the complex. Requires [4Fe-4S] cluster as cofactor.

It is found in the cell inner membrane. The catalysed reaction is a quinone + NADH + 5 H(+)(in) = a quinol + NAD(+) + 4 H(+)(out). Its function is as follows. NDH-1 shuttles electrons from NADH, via FMN and iron-sulfur (Fe-S) centers, to quinones in the respiratory chain. Couples the redox reaction to proton translocation (for every two electrons transferred, four hydrogen ions are translocated across the cytoplasmic membrane), and thus conserves the redox energy in a proton gradient. This chain is NADH-quinone oxidoreductase subunit B, found in Granulibacter bethesdensis (strain ATCC BAA-1260 / CGDNIH1).